Reading from the N-terminus, the 172-residue chain is MKNIVLTGFMGSGKTTIGKLIAEKLDIELIDTDSEVIKEFGMTIDKIFEVHGEKKFREVETKVIERVSKLENVVISTGGGVVLNPENVKLLRENGVIYFLYAPAESILKRLKDDDTRPLLKNGDKLSNIIRLLNMRMPFYKNCDFEINTDILTPELAAEKIISIHLAKESKR.

Residue 11 to 16 (GSGKTT) coordinates ATP. Residue Thr15 coordinates Mg(2+). Substrate-binding residues include Asp33, Arg57, and Gly79. ATP is bound at residue Arg117. Substrate is bound at residue Arg136.

This sequence belongs to the shikimate kinase family. In terms of assembly, monomer. It depends on Mg(2+) as a cofactor.

It localises to the cytoplasm. It carries out the reaction shikimate + ATP = 3-phosphoshikimate + ADP + H(+). It functions in the pathway metabolic intermediate biosynthesis; chorismate biosynthesis; chorismate from D-erythrose 4-phosphate and phosphoenolpyruvate: step 5/7. Its function is as follows. Catalyzes the specific phosphorylation of the 3-hydroxyl group of shikimic acid using ATP as a cosubstrate. The sequence is that of Shikimate kinase from Caldicellulosiruptor bescii (strain ATCC BAA-1888 / DSM 6725 / KCTC 15123 / Z-1320) (Anaerocellum thermophilum).